The sequence spans 49 residues: Turripeptide OL47 (49 aa).

The tract at residues 28 to 49 (RSDTEKKCTGGPDPCPPRQWPD) is disordered. A compositionally biased stretch (pro residues) spans 40–49 (DPCPPRQWPD).

Post-translationally, contains 4 disulfide bonds. In terms of tissue distribution, expressed by the venom duct.

The protein resides in the secreted. Acts as a neurotoxin by inhibiting an ion channel. This Iotyrris olangoensis (Sea snail) protein is Turripeptide OL47.